A 462-amino-acid chain; its full sequence is MATMAATKVPEVRDVTRIERIGAHSHIRGLGLDDALEPRQVSQGMVGQLASRRAAGVILEMIKEGKIAGRAVLIAGQPGTGKTAIAMGMAQALGSDTPFTAIAGSEIFSLEMSKTEALTQAFRRSIGVRIKEETEIIEGEVVEVQIDRPATGTGAKVGKLTLKTTEMETIYDLGTKMIESLTKEKVQAGDVITIDKATGKITKLGRAFTRARDYDAMGSQTKFVQCPDGELQKRKEVVHTVSLHEIDVINSRTQGFLALFSGDTGEIKSEVREQINAKVAEWREEGKAEIIPGVLFIDEVHMLDIECFSFLNRALESDMAPVLIMATNRGITRIRGTNYQSPHGIPIDLLDRLLIISTSPYNEKETKQILKIRCEEEDVDMSEDAYTVLTRIGLETSLRYSMQLITAASLVCRKRKGTEVQVDDIKRVYSLFLDESRSTQYMKEYQDAFMFNEMKTDTMDTS.

Residue 76-83 (GQPGTGKT) coordinates ATP.

It belongs to the RuvB family. As to quaternary structure, forms homohexameric rings. Can form a dodecamer with ruvbl2 made of two stacked hexameric rings. Is a component of the RNA polymerase II holoenzyme complex. Component of the chromatin-remodeling Ino80 complex. Component of some MLL1/MLL complex.

The protein resides in the nucleus. Its subcellular location is the dynein axonemal particle. It carries out the reaction ATP + H2O = ADP + phosphate + H(+). Its function is as follows. Has single-stranded DNA-stimulated ATPase and ATP-dependent DNA helicase (5' to 3') activity suggesting a role in nuclear processes such as recombination and transcription. Proposed core component of the chromatin remodeling INO80 complex which exhibits DNA- and nucleosome-activated ATPase activity and catalyzes ATP-dependent nucleosome sliding. Involved in the endoplasmic reticulum (ER)-associated degradation (ERAD) pathway where it negatively regulates expression of ER stress response genes. The chain is RuvB-like 2 (ruvbl2) from Xenopus laevis (African clawed frog).